A 365-amino-acid chain; its full sequence is 1-aminocyclopropane-1-carboxylate oxidase homolog 1 (365 aa).

The Fe2OG dioxygenase domain occupies 212–313; sequence CTNSLLLLGH…RISVACFFSS (102 aa). Fe cation-binding residues include histidine 238, aspartate 240, and histidine 294.

Belongs to the iron/ascorbate-dependent oxidoreductase family. The cofactor is Fe cation.

This is 1-aminocyclopropane-1-carboxylate oxidase homolog 1 from Arabidopsis thaliana (Mouse-ear cress).